Consider the following 203-residue polypeptide: GTP-binding protein YPTM2 (203 aa).

Residues 15-23 (GDSGVGKSC), 33-40 (YLDSYIST), 63-67 (DTAGQ), 121-124 (NKSD), and 151-153 (SAK) contribute to the GTP site. Residues 37 to 45 (YISTIGVDF) carry the Effector region motif. 2 S-geranylgeranyl cysteine lipidation sites follow: C200 and C201.

It belongs to the small GTPase superfamily. Rab family. As to expression, its expression is weak in stems, higher in roots, leaves and coleoptiles, but highest in flowers.

The protein localises to the cell membrane. Protein transport. Probably involved in vesicular traffic. This chain is GTP-binding protein YPTM2 (YPTM2), found in Zea mays (Maize).